The following is a 260-amino-acid chain: DNA import protein CedA (260 aa).

A run of 6 helical transmembrane segments spans residues 13 to 33 (LLAS…VPVY), 47 to 67 (IYVV…GELL), 110 to 130 (ALIQ…ALTF), 140 to 160 (IVYQ…SIPF), 169 to 189 (AFIG…QFLA), and 220 to 240 (IITS…GFSM).

Forms a complex composed of CedA, CedA1 and CedA2.

It localises to the cell membrane. In terms of biological role, part of the Ced system, which is involved in DNA import. The protein is DNA import protein CedA of Sulfolobus acidocaldarius (strain ATCC 33909 / DSM 639 / JCM 8929 / NBRC 15157 / NCIMB 11770).